A 242-amino-acid chain; its full sequence is Biosynthetic peptidoglycan transglycosylase (242 aa).

Residues 19 to 39 (LMVVLAVFWGGGIALFSVAPV) traverse the membrane as a helical segment.

Belongs to the glycosyltransferase 51 family.

The protein resides in the cell inner membrane. The enzyme catalyses [GlcNAc-(1-&gt;4)-Mur2Ac(oyl-L-Ala-gamma-D-Glu-L-Lys-D-Ala-D-Ala)](n)-di-trans,octa-cis-undecaprenyl diphosphate + beta-D-GlcNAc-(1-&gt;4)-Mur2Ac(oyl-L-Ala-gamma-D-Glu-L-Lys-D-Ala-D-Ala)-di-trans,octa-cis-undecaprenyl diphosphate = [GlcNAc-(1-&gt;4)-Mur2Ac(oyl-L-Ala-gamma-D-Glu-L-Lys-D-Ala-D-Ala)](n+1)-di-trans,octa-cis-undecaprenyl diphosphate + di-trans,octa-cis-undecaprenyl diphosphate + H(+). Its pathway is cell wall biogenesis; peptidoglycan biosynthesis. Its function is as follows. Peptidoglycan polymerase that catalyzes glycan chain elongation from lipid-linked precursors. This Escherichia coli (strain ATCC 8739 / DSM 1576 / NBRC 3972 / NCIMB 8545 / WDCM 00012 / Crooks) protein is Biosynthetic peptidoglycan transglycosylase.